The sequence spans 543 residues: CTP synthase (543 aa).

The segment at 1–265 (MTRYIFVTGG…DDFVVERFGL (265 aa)) is amidoligase domain. Ser13 contributes to the CTP binding site. A UTP-binding site is contributed by Ser13. ATP-binding positions include 14 to 19 (SLGKGI) and Asp71. Mg(2+) contacts are provided by Asp71 and Glu139. CTP contacts are provided by residues 146 to 148 (DIE), 186 to 191 (KTKPTQ), and Lys222. Residues 186 to 191 (KTKPTQ) and Lys222 contribute to the UTP site. The Glutamine amidotransferase type-1 domain occupies 290-541 (TIAMVGKYME…VKAALAQHQK (252 aa)). L-glutamine is bound at residue Gly351. Cys378 acts as the Nucleophile; for glutamine hydrolysis in catalysis. L-glutamine-binding positions include 379–382 (LGMQ), Glu402, and Arg469. Active-site residues include His514 and Glu516.

Belongs to the CTP synthase family. Homotetramer.

It carries out the reaction UTP + L-glutamine + ATP + H2O = CTP + L-glutamate + ADP + phosphate + 2 H(+). The catalysed reaction is L-glutamine + H2O = L-glutamate + NH4(+). It catalyses the reaction UTP + NH4(+) + ATP = CTP + ADP + phosphate + 2 H(+). The protein operates within pyrimidine metabolism; CTP biosynthesis via de novo pathway; CTP from UDP: step 2/2. Allosterically activated by GTP, when glutamine is the substrate; GTP has no effect on the reaction when ammonia is the substrate. The allosteric effector GTP functions by stabilizing the protein conformation that binds the tetrahedral intermediate(s) formed during glutamine hydrolysis. Inhibited by the product CTP, via allosteric rather than competitive inhibition. Functionally, catalyzes the ATP-dependent amination of UTP to CTP with either L-glutamine or ammonia as the source of nitrogen. Regulates intracellular CTP levels through interactions with the four ribonucleotide triphosphates. This chain is CTP synthase, found in Pseudomonas syringae pv. tomato (strain ATCC BAA-871 / DC3000).